We begin with the raw amino-acid sequence, 391 residues long: Na(+)/H(+) antiporter NhaA (391 aa).

Helical transmembrane passes span 14 to 34, 59 to 79, 95 to 115, 124 to 144, 154 to 174, 177 to 197, 213 to 233, 261 to 281, 290 to 310, 328 to 348, and 363 to 383; these read AGGI…NSPL, LLLW…GLEV, SLPS…YLLF, AGWA…MALL, VFLL…IALF, SDLS…LVGL, LILW…GVII, FLIL…NMSL, IGIA…FSFI, IAPV…IASL, and LGTL…LSKV.

Belongs to the NhaA Na(+)/H(+) (TC 2.A.33) antiporter family.

It is found in the cell inner membrane. It catalyses the reaction Na(+)(in) + 2 H(+)(out) = Na(+)(out) + 2 H(+)(in). Its function is as follows. Na(+)/H(+) antiporter that extrudes sodium in exchange for external protons. This is Na(+)/H(+) antiporter NhaA from Shewanella putrefaciens (strain CN-32 / ATCC BAA-453).